We begin with the raw amino-acid sequence, 688 residues long: Chaperone protein dnaK1 (688 aa).

Threonine 198 carries the phosphothreonine; by autocatalysis modification. The span at 630 to 661 (DLPRDSYRERDAYNNRDYGRDYGRDYGRDSRP) shows a compositional bias: basic and acidic residues. A disordered region spans residues 630–688 (DLPRDSYRERDAYNNRDYGRDYGRDYGRDSRPSYDNSRPPRKSPRPSYQDNWDDDDDWL).

The protein belongs to the heat shock protein 70 family.

Acts as a chaperone. This Nostoc sp. (strain PCC 7120 / SAG 25.82 / UTEX 2576) protein is Chaperone protein dnaK1 (dnaK1).